We begin with the raw amino-acid sequence, 407 residues long: Myeloid cell nuclear differentiation antigen (407 aa).

One can recognise a Pyrin domain in the interval M1 to K88. Residues L122–P211 are disordered. The short motif at P131–K137 is the Nuclear localization signal element. Positions H177–Q199 are enriched in low complexity. Residues A196 to I394 form the HIN-200 domain.

Participates in a ternary complex with YY1 and the YY1 target DNA element. Binds nucleolin and nucleophosmin/NPM/B23.

The protein localises to the nucleus. The protein resides in the cytoplasm. Its function is as follows. May act as a transcriptional activator/repressor in the myeloid lineage. Plays a role in the granulocyte/monocyte cell-specific response to interferon. Stimulates the DNA binding of the transcriptional repressor protein YY1. The protein is Myeloid cell nuclear differentiation antigen (MNDA) of Macaca fascicularis (Crab-eating macaque).